The chain runs to 128 residues: MNLIQLLEQEEIARLTAGKTIPAFAPGDTVVVQVKVKEGNRERLQAYEGVVIAKRNRGLNSSFIVRKISSGEGVERTFQTYSPLVATIEVKRRGDVRRAKLYYLRQRSGKSARIKEKLDYKSAAGKKA.

Belongs to the bacterial ribosomal protein bL19 family.

Its function is as follows. This protein is located at the 30S-50S ribosomal subunit interface and may play a role in the structure and function of the aminoacyl-tRNA binding site. The chain is Large ribosomal subunit protein bL19 from Azoarcus sp. (strain BH72).